The sequence spans 583 residues: Laccase-21 (583 aa).

The first 29 residues, 1 to 29 (MGIAKIPAVLWLLACAVLTFAVAISPAHG), serve as a signal peptide directing secretion. Plastocyanin-like domains follow at residues 39–155 (FITE…PKHG) and 165–323 (KEIP…YYTG). Asparagine 85 carries an N-linked (GlcNAc...) asparagine glycan. Positions 89, 91, 134, and 136 each coordinate Cu cation. N-linked (GlcNAc...) asparagine glycans are attached at residues asparagine 282, asparagine 311, asparagine 384, asparagine 387, asparagine 399, asparagine 409, and asparagine 446. A Plastocyanin-like 3 domain is found at 436–567 (FPNNPAPVFV…NTVFIVKDGK (132 aa)). 8 residues coordinate Cu cation: histidine 484, histidine 487, histidine 489, histidine 546, cysteine 547, histidine 548, histidine 552, and methionine 557.

The protein belongs to the multicopper oxidase family. It depends on Cu cation as a cofactor.

It is found in the secreted. It localises to the extracellular space. The protein resides in the apoplast. The enzyme catalyses 4 hydroquinone + O2 = 4 benzosemiquinone + 2 H2O. Functionally, lignin degradation and detoxification of lignin-derived products. This Oryza sativa subsp. japonica (Rice) protein is Laccase-21 (LAC21).